We begin with the raw amino-acid sequence, 571 residues long: Urease subunit alpha (571 aa).

Residues 132 to 571 (GGIDAHIHFI…VALAQRYFLF (440 aa)) form the Urease domain. Residues histidine 137, histidine 139, and lysine 220 each coordinate Ni(2+). The residue at position 220 (lysine 220) is an N6-carboxylysine. Histidine 222 contributes to the substrate binding site. Residues histidine 249 and histidine 275 each contribute to the Ni(2+) site. Histidine 323 acts as the Proton donor in catalysis. Residue aspartate 363 coordinates Ni(2+).

It belongs to the metallo-dependent hydrolases superfamily. Urease alpha subunit family. As to quaternary structure, heterotrimer of UreA (gamma), UreB (beta) and UreC (alpha) subunits. Three heterotrimers associate to form the active enzyme. Requires Ni cation as cofactor. Post-translationally, carboxylation allows a single lysine to coordinate two nickel ions.

The protein resides in the cytoplasm. It catalyses the reaction urea + 2 H2O + H(+) = hydrogencarbonate + 2 NH4(+). It functions in the pathway nitrogen metabolism; urea degradation; CO(2) and NH(3) from urea (urease route): step 1/1. The protein is Urease subunit alpha of Halalkalibacterium halodurans (strain ATCC BAA-125 / DSM 18197 / FERM 7344 / JCM 9153 / C-125) (Bacillus halodurans).